The following is a 113-amino-acid chain: Large ribosomal subunit protein uL22 (113 aa).

The protein belongs to the universal ribosomal protein uL22 family. Part of the 50S ribosomal subunit.

In terms of biological role, this protein binds specifically to 23S rRNA; its binding is stimulated by other ribosomal proteins, e.g. L4, L17, and L20. It is important during the early stages of 50S assembly. It makes multiple contacts with different domains of the 23S rRNA in the assembled 50S subunit and ribosome. Its function is as follows. The globular domain of the protein is located near the polypeptide exit tunnel on the outside of the subunit, while an extended beta-hairpin is found that lines the wall of the exit tunnel in the center of the 70S ribosome. This chain is Large ribosomal subunit protein uL22, found in Xanthomonas oryzae pv. oryzae (strain MAFF 311018).